Consider the following 321-residue polypeptide: Probable arabinan endo-1,5-alpha-L-arabinosidase A (321 aa).

The signal sequence occupies residues 1-19 (MHPSTFVTTIACLAGLAHG). Residue D34 is the Proton acceptor of the active site. The active-site Proton donor is the E200.

Belongs to the glycosyl hydrolase 43 family.

Its subcellular location is the secreted. It catalyses the reaction Endohydrolysis of (1-&gt;5)-alpha-arabinofuranosidic linkages in (1-&gt;5)-arabinans.. It functions in the pathway glycan metabolism; L-arabinan degradation. Functionally, endo-1,5-alpha-L-arabinanase involved in degradation of pectin. Its preferred substrate is linear 1,5-alpha-L-arabinan. The sequence is that of Probable arabinan endo-1,5-alpha-L-arabinosidase A (abnA) from Aspergillus clavatus (strain ATCC 1007 / CBS 513.65 / DSM 816 / NCTC 3887 / NRRL 1 / QM 1276 / 107).